The sequence spans 187 residues: MRVYHSNNFRSGRKIIFEKEPCLIESSEFVKPGKGQSFVRVKLRKLLTKQLIEKTFKSTDSLEIADVSEYTLSYLYNDGHFWYFINNNFEELSVDKKIVGVNKKWLSEQDTCVITFWNNQAISITPNIFVELKVIDTEIALKSDTINTTTKLATLSTGAILKVPLFIQIGSLIKVDTRSGEYVSRIK.

Lysine 34 bears the N6-(3,6-diaminohexanoyl)-5-hydroxylysine mark.

The protein belongs to the elongation factor P family. Post-translationally, may be beta-lysylated on the epsilon-amino group of Lys-34 by the combined action of EpmA and EpmB, and then hydroxylated on the C5 position of the same residue by EpmC (if this protein is present). Lysylation is critical for the stimulatory effect of EF-P on peptide-bond formation. The lysylation moiety may extend toward the peptidyltransferase center and stabilize the terminal 3-CCA end of the tRNA. Hydroxylation of the C5 position on Lys-34 may allow additional potential stabilizing hydrogen-bond interactions with the P-tRNA.

It is found in the cytoplasm. Its pathway is protein biosynthesis; polypeptide chain elongation. In terms of biological role, involved in peptide bond synthesis. Alleviates ribosome stalling that occurs when 3 or more consecutive Pro residues or the sequence PPG is present in a protein, possibly by augmenting the peptidyl transferase activity of the ribosome. Modification of Lys-34 is required for alleviation. This is Elongation factor P from Buchnera aphidicola subsp. Schizaphis graminum (strain Sg).